A 211-amino-acid polypeptide reads, in one-letter code: Probable cytokinin riboside 5'-monophosphate phosphoribohydrolase LOGL3 (211 aa).

Substrate-binding positions include glutamate 84, arginine 102–lysine 103, glycine 119–glutamate 125, and threonine 131.

Belongs to the LOG family. Expressed in roots, leaves, stems, tiller buds, shoot apex, immature inflorescences and flowers.

It carries out the reaction N(6)-(dimethylallyl)adenosine 5'-phosphate + H2O = N(6)-dimethylallyladenine + D-ribose 5-phosphate. The enzyme catalyses 9-ribosyl-trans-zeatin 5'-phosphate + H2O = trans-zeatin + D-ribose 5-phosphate. Functionally, cytokinin-activating enzyme working in the direct activation pathway. Phosphoribohydrolase that converts inactive cytokinin nucleotides to the biologically active free-base forms. The sequence is that of Probable cytokinin riboside 5'-monophosphate phosphoribohydrolase LOGL3 (LOGL3) from Oryza sativa subsp. japonica (Rice).